Here is a 647-residue protein sequence, read N- to C-terminus: Acetyl-coenzyme A synthetase (647 aa).

CoA is bound by residues 190–193, T310, and N334; that span reads RGGK. ATP contacts are provided by residues 386–388, 410–415, D499, and R514; these read GEP and DTWWQT. S522 is a binding site for CoA. Residue R525 participates in ATP binding. V536, H538, and V541 together coordinate Mg(2+). R583 is a binding site for CoA. K608 is subject to N6-acetyllysine.

The protein belongs to the ATP-dependent AMP-binding enzyme family. Mg(2+) is required as a cofactor. Acetylated. Deacetylation by the SIR2-homolog deacetylase activates the enzyme.

The enzyme catalyses acetate + ATP + CoA = acetyl-CoA + AMP + diphosphate. Functionally, catalyzes the conversion of acetate into acetyl-CoA (AcCoA), an essential intermediate at the junction of anabolic and catabolic pathways. AcsA undergoes a two-step reaction. In the first half reaction, AcsA combines acetate with ATP to form acetyl-adenylate (AcAMP) intermediate. In the second half reaction, it can then transfer the acetyl group from AcAMP to the sulfhydryl group of CoA, forming the product AcCoA. This chain is Acetyl-coenzyme A synthetase, found in Xanthomonas axonopodis pv. citri (strain 306).